Here is a 247-residue protein sequence, read N- to C-terminus: Cytochrome c oxidase subunit 2 (247 aa).

Residues D12 to N38 are Mitochondrial intermembrane-facing. A helical membrane pass occupies residues I39 to K59. At D60–E78 the chain is on the mitochondrial matrix side. Residues I79–Y101 form a helical membrane-spanning segment. At L102–Q247 the chain is on the mitochondrial intermembrane side. Residues H182, C217, E219, C221, H225, and M228 each coordinate Cu cation. E219 contributes to the Mg(2+) binding site.

The protein belongs to the cytochrome c oxidase subunit 2 family. In terms of assembly, component of the cytochrome c oxidase (complex IV, CIV), a multisubunit enzyme composed of a catalytic core of 3 subunits and several supernumerary subunits. The complex exists as a monomer or a dimer and forms supercomplexes (SCs) in the inner mitochondrial membrane with ubiquinol-cytochrome c oxidoreductase (cytochrome b-c1 complex, complex III, CIII). Cu cation serves as cofactor. The signal sequence of COX2 is processed by IMP1.

It localises to the mitochondrion inner membrane. The catalysed reaction is 4 Fe(II)-[cytochrome c] + O2 + 8 H(+)(in) = 4 Fe(III)-[cytochrome c] + 2 H2O + 4 H(+)(out). Component of the cytochrome c oxidase, the last enzyme in the mitochondrial electron transport chain which drives oxidative phosphorylation. The respiratory chain contains 3 multisubunit complexes succinate dehydrogenase (complex II, CII), ubiquinol-cytochrome c oxidoreductase (cytochrome b-c1 complex, complex III, CIII) and cytochrome c oxidase (complex IV, CIV), that cooperate to transfer electrons derived from NADH and succinate to molecular oxygen, creating an electrochemical gradient over the inner membrane that drives transmembrane transport and the ATP synthase. Cytochrome c oxidase is the component of the respiratory chain that catalyzes the reduction of oxygen to water. Electrons originating from reduced cytochrome c in the intermembrane space (IMS) are transferred via the dinuclear copper A center (CU(A)) of subunit 2 and heme A of subunit 1 to the active site in subunit 1, a binuclear center (BNC) formed by heme A3 and copper B (CU(B)). The BNC reduces molecular oxygen to 2 water molecules using 4 electrons from cytochrome c in the IMS and 4 protons from the mitochondrial matrix. This Cyberlindnera saturnus (Yeast) protein is Cytochrome c oxidase subunit 2 (COX2).